Here is a 124-residue protein sequence, read N- to C-terminus: Quinol oxidase subunit 4 (124 aa).

A run of 3 helical transmembrane segments spans residues 16-36 (IVGFILSIVLTLLALWVAVYT), 44-64 (LWIIFGFAFIQAALQLLMFMH), and 78-98 (TLFGFFGAIVIVLGSIWIFAA).

This sequence belongs to the cytochrome c oxidase bacterial subunit 4 family.

The protein localises to the cell membrane. It carries out the reaction 2 a quinol + O2 = 2 a quinone + 2 H2O. Catalyzes quinol oxidation with the concomitant reduction of oxygen to water. Major component for energy conversion during vegetative growth. The sequence is that of Quinol oxidase subunit 4 (qoxD) from Bacillus subtilis (strain 168).